Here is a 390-residue protein sequence, read N- to C-terminus: Dual-specificity RNA methyltransferase RlmN (390 aa).

E111 functions as the Proton acceptor in the catalytic mechanism. Residues E117–D356 form the Radical SAM core domain. Cysteines 124 and 361 form a disulfide. The [4Fe-4S] cluster site is built by C131, C135, and C138. Residues G185–E186, S217, S239–H241, and N318 each bind S-adenosyl-L-methionine. C361 (S-methylcysteine intermediate) is an active-site residue.

This sequence belongs to the radical SAM superfamily. RlmN family. The cofactor is [4Fe-4S] cluster.

The protein localises to the cytoplasm. The catalysed reaction is adenosine(2503) in 23S rRNA + 2 reduced [2Fe-2S]-[ferredoxin] + 2 S-adenosyl-L-methionine = 2-methyladenosine(2503) in 23S rRNA + 5'-deoxyadenosine + L-methionine + 2 oxidized [2Fe-2S]-[ferredoxin] + S-adenosyl-L-homocysteine. It carries out the reaction adenosine(37) in tRNA + 2 reduced [2Fe-2S]-[ferredoxin] + 2 S-adenosyl-L-methionine = 2-methyladenosine(37) in tRNA + 5'-deoxyadenosine + L-methionine + 2 oxidized [2Fe-2S]-[ferredoxin] + S-adenosyl-L-homocysteine. Its function is as follows. Specifically methylates position 2 of adenine 2503 in 23S rRNA and position 2 of adenine 37 in tRNAs. m2A2503 modification seems to play a crucial role in the proofreading step occurring at the peptidyl transferase center and thus would serve to optimize ribosomal fidelity. The sequence is that of Dual-specificity RNA methyltransferase RlmN from Edwardsiella ictaluri (strain 93-146).